A 106-amino-acid chain; its full sequence is Nucleoid-associated protein XC_3243 (106 aa).

The interval 82–106 (DAESKERMGSATAGMQLPPGMKLPF) is disordered.

It belongs to the YbaB/EbfC family. As to quaternary structure, homodimer.

It is found in the cytoplasm. Its subcellular location is the nucleoid. Binds to DNA and alters its conformation. May be involved in regulation of gene expression, nucleoid organization and DNA protection. In Xanthomonas campestris pv. campestris (strain 8004), this protein is Nucleoid-associated protein XC_3243.